The chain runs to 230 residues: MPIIKSSRVNIGRFTIGGSIPIVIISIFDHDAKSLTEKFETKKLSDKNLYEIRFDLFDKVNIDEELEIIRALDEMDIDYIFTYRGHDPEKIYETAITKMVPAVDMDLSLLNKVNRRSPDTRIMVSYHTDSSKDMIEKLDEMLKANADIVKVACNYKDEKNFFKDLIEIAQRKEISGKPVLFIPMGKSFLRVISAYYVSDMVYAKYDKETAMGQPDPDYYNKAFSLFNYIG.

3-dehydroquinate-binding positions include Ser-26, Glu-51–Arg-53, and Arg-84. The active-site Proton donor/acceptor is the His-127. The active-site Schiff-base intermediate with substrate is Lys-150. 3 residues coordinate 3-dehydroquinate: Arg-190, Thr-209, and Gln-213.

This sequence belongs to the type-I 3-dehydroquinase family. Homodimer.

It catalyses the reaction 3-dehydroquinate = 3-dehydroshikimate + H2O. It participates in metabolic intermediate biosynthesis; chorismate biosynthesis; chorismate from D-erythrose 4-phosphate and phosphoenolpyruvate: step 3/7. Its function is as follows. Involved in the third step of the chorismate pathway, which leads to the biosynthesis of aromatic amino acids. Catalyzes the cis-dehydration of 3-dehydroquinate (DHQ) and introduces the first double bond of the aromatic ring to yield 3-dehydroshikimate. The chain is 3-dehydroquinate dehydratase from Thermoplasma volcanium (strain ATCC 51530 / DSM 4299 / JCM 9571 / NBRC 15438 / GSS1).